The following is a 180-amino-acid chain: Segregation and condensation protein B (180 aa).

The protein belongs to the ScpB family. Homodimer. Homodimerization may be required to stabilize the binding of ScpA to the Smc head domains. Component of a cohesin-like complex composed of ScpA, ScpB and the Smc homodimer, in which ScpA and ScpB bind to the head domain of Smc. The presence of the three proteins is required for the association of the complex with DNA.

The protein localises to the cytoplasm. In terms of biological role, participates in chromosomal partition during cell division. May act via the formation of a condensin-like complex containing Smc and ScpA that pull DNA away from mid-cell into both cell halves. The polypeptide is Segregation and condensation protein B (Staphylococcus aureus (strain Mu3 / ATCC 700698)).